The following is a 148-amino-acid chain: Nickel and cobalt resistance protein CnrR (148 aa).

The N-terminal stretch at 1-26 (MMKSRTRRLSLSTLFGALLGVSVAAA) is a signal peptide. At 28-148 (LYYSHRNEAG…LIDALRRGSQ (121 aa)) the chain is on the periplasmic side. Positions 54–117 (NEREILELKE…AAGDLQRATL (64 aa)) form a coiled coil.

To A.xylosoxydans NccX.

The protein resides in the periplasm. CnrH alone is able to activate cnr expression, while both CnrY and CrnR (CnrX) are needed for nickel induction of CnrH. Has been suggested to bind nickel. The polypeptide is Nickel and cobalt resistance protein CnrR (cnrR) (Cupriavidus metallidurans (strain ATCC 43123 / DSM 2839 / NBRC 102507 / CH34) (Ralstonia metallidurans)).